We begin with the raw amino-acid sequence, 1465 residues long: MALEIDAKNAAATGDAGTIGKAKAKENKNHNNNNNAPAAGEKNLVNGSSAATKKKGKKNRNKSPPQNAVEAEASAALSNGHSENGDAADANANVLAEKGEGVAAGAVVGDGAEGGASAEGAVAEGDAAAAGEDVDLDALHDIGITVNISSPGTDVLSVQLSSMELVQEIHQLLMDREETCHRTCFSLQLDNVTLDNFAELKTIESLEQGSTIRVVEEPYTMREARIHVRHVRDLLKNLDPADAYNGIDCTSLTYLNTITQGDLLDKKRTRPDSVDCTPPDYVTPGVREPPLLPLHPNIKNAKGPQALKVLTTSAWNPPPGPRKLHGDLMYLYVVTMEDKRFHISACSKGFYINQSTDECFNPKPDNPSHLSHSLIDLLSHISPSFRRAFQAIQKRRTMRHAFERVATPYQVYQWAAPQLEHTVDAIRAEDAFSSKLGYEEHIPGQTRDWNEELQTTRELPRKTLPERLLRERAIFKVHGDFVTAATRGAMAVIDGNVLAINPGEDAKMQMFIWNNIFFSLGFDVRDHYKELGGDHAAFVAPRYDLHGVRVYNAVDIEGLYTLGTVVIDYRGYRVTAQSIIPGILEREQEQSVVYGSIDFGKTVLSHPKYLELLRQAGKHLKILPHSVLNERDEPVELCSSVECKGIIGNDGRHYILDLLRTFPPDVNFLKLQDVQLSKELTEMGFPIEHRHKLCCLRQELLEAFIEDRYVTFIRIAAVHLQQLNAKKQAATANAEKELPAIAEKQEEPNEEQPEKTEEQPAEKEESKPTPSETKSAEAMVNAIREAQSNVAVSNEVQAAEVVKRACAAVGSLKEKEFDFRFNPDVFSPGIRHVDGPDGGVQSLAKQKRLVQDAAEFLVLKQIPAFIKEHMAHSSPPIDGQSLTESLHSHGINVRYLGKVIKMLGQMPRMDYLHRIAILEIIVRATKHIYYTYMQSTEPLHLSAAISHFLNCLLTTGPVNPAVSSDELHKKQPRNNSGKHNKHKAAKASKPQAAAAQNGNATAAGSGGAGATTSGATSSNSDWTLVTPRSLWQQIRKEVKAYWNWELDCDSIESAGAKYGLLRISLLRAFCLKVGIQVLLREYNFESKHKPTFGDDDIVNVFPVVKHISPRATDAYNFYTTGQAKIQQGMLKEGYELISEALNLLNNVFGAMHQENDSCLRMLARLSYLLGDAQDALAIQQRAVIMSERVNGIDHPSTILEYTHLSLYSFANGHVGMSLKLLYRARYLLVLICGEDHPEVALIDSNISLILHALGEYELSLRFIEHALKLNLKYFGNKAMHVAVSYHLMARIQSCMGDFRSALNNEKETYSIYKSQLGEKHEKTRESAECLRLLTHEAVALQRKMNDIYSNGKLTSDLPPIHITPPSMGSVLEMLNTINGILFVHISQKDIVKVRSEIEKHLKTNTDENDVPDESEITSALKTIVAAVNNNDNASETEQPKDEASAAGTPTQLTNGSEESTATVSS.

Positions 1 to 87 (MALEIDAKNA…SNGHSENGDA (87 aa)) are disordered. Residues 30–51 (HNNNNNAPAAGEKNLVNGSSAA) show a composition bias toward low complexity. A compositionally biased stretch (basic residues) spans 52-61 (TKKKGKKNRN). A Phosphoserine modification is found at serine 273. One can recognise a Clu domain in the interval 427 to 669 (RAEDAFSSKL…RTFPPDVNFL (243 aa)). Residues 742–767 (AEKQEEPNEEQPEKTEEQPAEKEESK) are compositionally biased toward basic and acidic residues. Disordered regions lie at residues 742-776 (AEKQ…TKSA) and 962-1021 (VSSD…SNSD). A compositionally biased stretch (basic residues) spans 970-986 (KQPRNNSGKHNKHKAAK). Low complexity-rich tracts occupy residues 987–1003 (ASKP…ATAA) and 1010–1020 (ATTSGATSSNS). 3 TPR repeats span residues 1114–1147 (AYNF…LNNV), 1240–1273 (ALID…NLKY), and 1275–1308 (GNKA…EKET). Residues 1428 to 1465 (NNNDNASETEQPKDEASAAGTPTQLTNGSEESTATVSS) are disordered. Positions 1447 to 1465 (GTPTQLTNGSEESTATVSS) are enriched in polar residues.

The protein belongs to the CLU family.

The protein localises to the cytoplasm. Functionally, mRNA-binding protein involved in proper cytoplasmic distribution of mitochondria. This Drosophila virilis (Fruit fly) protein is Protein clueless.